We begin with the raw amino-acid sequence, 361 residues long: Peptide chain release factor 1 (361 aa).

At glutamine 235 the chain carries N5-methylglutamine.

Belongs to the prokaryotic/mitochondrial release factor family. Methylated by PrmC. Methylation increases the termination efficiency of RF1.

The protein localises to the cytoplasm. Functionally, peptide chain release factor 1 directs the termination of translation in response to the peptide chain termination codons UAG and UAA. This Chlamydia abortus (strain DSM 27085 / S26/3) (Chlamydophila abortus) protein is Peptide chain release factor 1.